The primary structure comprises 207 residues: Protein dct-5 (207 aa).

Residues 13–33 traverse the membrane as a helical segment; that stretch reads LNFILSIMNSYLFVLIVSIGF.

The protein resides in the membrane. In terms of biological role, acts downstream of daf-16/foxo to suppress tumors induced by disruption of gld-1. Potentially a direct target of daf-15/foxo. In Caenorhabditis elegans, this protein is Protein dct-5 (dct-5).